The sequence spans 79 residues: Acyl carrier protein (79 aa).

The region spanning 2–77 (SDIEARVKKI…LAIDYAKSHA (76 aa)) is the Carrier domain. At serine 37 the chain carries O-(pantetheine 4'-phosphoryl)serine.

The protein belongs to the acyl carrier protein (ACP) family. 4'-phosphopantetheine is transferred from CoA to a specific serine of apo-ACP by AcpS. This modification is essential for activity because fatty acids are bound in thioester linkage to the sulfhydryl of the prosthetic group.

The protein localises to the cytoplasm. It functions in the pathway lipid metabolism; fatty acid biosynthesis. Carrier of the growing fatty acid chain in fatty acid biosynthesis. This chain is Acyl carrier protein, found in Methylibium petroleiphilum (strain ATCC BAA-1232 / LMG 22953 / PM1).